Consider the following 464-residue polypeptide: Cysteine--tRNA ligase (464 aa).

Cys28 is a binding site for Zn(2+). The 'HIGH' region motif lies at 30-40 (PTVYDTAHIGN). The Zn(2+) site is built by Cys212, His237, and Glu241. The 'KMSKS' region motif lies at 270 to 274 (KMSKS). Lys273 serves as a coordination point for ATP.

Belongs to the class-I aminoacyl-tRNA synthetase family. Monomer. Zn(2+) serves as cofactor.

It is found in the cytoplasm. The enzyme catalyses tRNA(Cys) + L-cysteine + ATP = L-cysteinyl-tRNA(Cys) + AMP + diphosphate. This Wolbachia pipientis subsp. Culex pipiens (strain wPip) protein is Cysteine--tRNA ligase.